The following is a 228-amino-acid chain: Translin (228 aa).

Residues Arg-86–His-90 are DNA/RNA binding. Residues Leu-177–Leu-198 are leucine-zipper. Lys-187 carries the N6-acetyllysine modification. Ser-190 is subject to Phosphoserine. At Lys-199 the chain carries N6-acetyllysine.

Belongs to the translin family. As to quaternary structure, ring-shaped heterooctamer of six TSN and two TSNAX subunits, DNA/RNA binding occurs inside the ring.

Its subcellular location is the cytoplasm. It localises to the nucleus. Functionally, DNA-binding protein that specifically recognizes consensus sequences at the breakpoint junctions in chromosomal translocations, mostly involving immunoglobulin (Ig)/T-cell receptor gene segments. Seems to recognize single-stranded DNA ends generated by staggered breaks occurring at recombination hot spots. Its function is as follows. Exhibits both single-stranded and double-stranded endoribonuclease activity. May act as an activator of RNA-induced silencing complex (RISC) by facilitating endonucleolytic cleavage of the siRNA passenger strand. In Mus musculus (Mouse), this protein is Translin (Tsn).